A 367-amino-acid polypeptide reads, in one-letter code: DNA replication and repair protein RecF (367 aa).

Position 30–37 (30–37 (GANGSGKT)) interacts with ATP.

Belongs to the RecF family.

Its subcellular location is the cytoplasm. In terms of biological role, the RecF protein is involved in DNA metabolism; it is required for DNA replication and normal SOS inducibility. RecF binds preferentially to single-stranded, linear DNA. It also seems to bind ATP. The polypeptide is DNA replication and repair protein RecF (Pseudomonas fluorescens (strain ATCC BAA-477 / NRRL B-23932 / Pf-5)).